The primary structure comprises 89 residues: Small ribosomal subunit protein uS15 (89 aa).

The protein belongs to the universal ribosomal protein uS15 family. In terms of assembly, part of the 30S ribosomal subunit. Forms a bridge to the 50S subunit in the 70S ribosome, contacting the 23S rRNA.

Its function is as follows. One of the primary rRNA binding proteins, it binds directly to 16S rRNA where it helps nucleate assembly of the platform of the 30S subunit by binding and bridging several RNA helices of the 16S rRNA. Functionally, forms an intersubunit bridge (bridge B4) with the 23S rRNA of the 50S subunit in the ribosome. The protein is Small ribosomal subunit protein uS15 of Shewanella sediminis (strain HAW-EB3).